Consider the following 238-residue polypeptide: Ribonuclease PH (238 aa).

Phosphate is bound by residues arginine 86 and 124–126 (GTR).

The protein belongs to the RNase PH family. Homohexameric ring arranged as a trimer of dimers.

It catalyses the reaction tRNA(n+1) + phosphate = tRNA(n) + a ribonucleoside 5'-diphosphate. Functionally, phosphorolytic 3'-5' exoribonuclease that plays an important role in tRNA 3'-end maturation. Removes nucleotide residues following the 3'-CCA terminus of tRNAs; can also add nucleotides to the ends of RNA molecules by using nucleoside diphosphates as substrates, but this may not be physiologically important. Probably plays a role in initiation of 16S rRNA degradation (leading to ribosome degradation) during starvation. The protein is Ribonuclease PH of Vibrio cholerae serotype O1 (strain ATCC 39315 / El Tor Inaba N16961).